The sequence spans 212 residues: Redox-sensing transcriptional repressor Rex (212 aa).

The H-T-H motif DNA-binding region spans 17-56 (LYARSLRYLLEEGIHSVSSQELGERINVTAAQIRKDLSYF). Position 91–96 (91–96 (GIGLLG)) interacts with NAD(+).

Belongs to the transcriptional regulatory Rex family. Homodimer.

The protein localises to the cytoplasm. In terms of biological role, modulates transcription in response to changes in cellular NADH/NAD(+) redox state. In Chloroflexus aggregans (strain MD-66 / DSM 9485), this protein is Redox-sensing transcriptional repressor Rex.